The following is a 477-amino-acid chain: tRNA(Ile)-lysidine synthase (477 aa).

An ATP-binding site is contributed by 36-41; the sequence is SGGADS.

This sequence belongs to the tRNA(Ile)-lysidine synthase family.

It is found in the cytoplasm. It carries out the reaction cytidine(34) in tRNA(Ile2) + L-lysine + ATP = lysidine(34) in tRNA(Ile2) + AMP + diphosphate + H(+). In terms of biological role, ligates lysine onto the cytidine present at position 34 of the AUA codon-specific tRNA(Ile) that contains the anticodon CAU, in an ATP-dependent manner. Cytidine is converted to lysidine, thus changing the amino acid specificity of the tRNA from methionine to isoleucine. The sequence is that of tRNA(Ile)-lysidine synthase from Treponema pallidum (strain Nichols).